We begin with the raw amino-acid sequence, 329 residues long: ADP-L-glycero-D-manno-heptose-6-epimerase (329 aa).

NADP(+) contacts are provided by residues 10-11 (FI), 31-32 (DD), lysine 38, lysine 53, 74-78 (QGACS), and asparagine 91. The active-site Proton acceptor is tyrosine 138. NADP(+) is bound at residue lysine 142. Asparagine 167 is a substrate binding site. Residues valine 168 and lysine 176 each coordinate NADP(+). The active-site Proton acceptor is the lysine 176. Substrate-binding positions include arginine 178, histidine 185, 199–202 (FAGW), arginine 212, and tyrosine 291.

Belongs to the NAD(P)-dependent epimerase/dehydratase family. HldD subfamily. As to quaternary structure, homopentamer. It depends on NADP(+) as a cofactor.

The enzyme catalyses ADP-D-glycero-beta-D-manno-heptose = ADP-L-glycero-beta-D-manno-heptose. It participates in nucleotide-sugar biosynthesis; ADP-L-glycero-beta-D-manno-heptose biosynthesis; ADP-L-glycero-beta-D-manno-heptose from D-glycero-beta-D-manno-heptose 7-phosphate: step 4/4. Its pathway is bacterial outer membrane biogenesis; LPS core biosynthesis. Its function is as follows. Catalyzes the interconversion between ADP-D-glycero-beta-D-manno-heptose and ADP-L-glycero-beta-D-manno-heptose via an epimerization at carbon 6 of the heptose. The sequence is that of ADP-L-glycero-D-manno-heptose-6-epimerase from Bordetella parapertussis (strain 12822 / ATCC BAA-587 / NCTC 13253).